Reading from the N-terminus, the 95-residue chain is Large ribosomal subunit protein uL23 (95 aa).

It belongs to the universal ribosomal protein uL23 family. Part of the 50S ribosomal subunit. Contacts protein L29, and trigger factor when it is bound to the ribosome.

Functionally, one of the early assembly proteins it binds 23S rRNA. One of the proteins that surrounds the polypeptide exit tunnel on the outside of the ribosome. Forms the main docking site for trigger factor binding to the ribosome. The polypeptide is Large ribosomal subunit protein uL23 (Geobacillus thermodenitrificans (strain NG80-2)).